The chain runs to 202 residues: Nitrophorin-3 (202 aa).

Positions 1-23 (MEPYSALLAVTILCLTSTMGVSG) are cleaved as a signal peptide. Disulfide bonds link Cys-25-Cys-144 and Cys-62-Cys-193. Residue His-80 coordinates heme.

The protein belongs to the calycin superfamily. Nitrophorin family. As to quaternary structure, interacts weakly with host coagulation factor IX (F9) (inactive and activated) in the presence of Ca(2+). In terms of tissue distribution, salivary gland (at protein level).

It localises to the secreted. Heme-based protein that deliver nitric oxide gas (NO) to the victim while feeding, resulting in vasodilation and inhibition of platelet aggregation. Reversibly binds nitric oxide (NO). Also binds tightly to histamine, which is released by the host to induce wound healing. Exhibits weak anticoagulant activity. The sequence is that of Nitrophorin-3 from Rhodnius prolixus (Triatomid bug).